Here is a 547-residue protein sequence, read N- to C-terminus: Methionine--tRNA ligase (547 aa).

Residues 15-25 (PYANGSIHIGH) carry the 'HIGH' region motif. Cysteine 146, cysteine 149, cysteine 159, and cysteine 162 together coordinate Zn(2+). The short motif at 332 to 336 (KLSKS) is the 'KMSKS' region element. Position 335 (lysine 335) interacts with ATP.

This sequence belongs to the class-I aminoacyl-tRNA synthetase family. MetG type 1 subfamily. As to quaternary structure, monomer. Requires Zn(2+) as cofactor.

It is found in the cytoplasm. The enzyme catalyses tRNA(Met) + L-methionine + ATP = L-methionyl-tRNA(Met) + AMP + diphosphate. Functionally, is required not only for elongation of protein synthesis but also for the initiation of all mRNA translation through initiator tRNA(fMet) aminoacylation. The sequence is that of Methionine--tRNA ligase (metG) from Buchnera aphidicola subsp. Acyrthosiphon pisum (strain APS) (Acyrthosiphon pisum symbiotic bacterium).